A 95-amino-acid polypeptide reads, in one-letter code: MSLEESEVKHIAHLARVAIEADDIPGYARNLSDILDFVEQMKDIDTSGVTPMAHPLDAVQRLREDEVTEPDQRERFQAIAPATEAGLYLVPRVIE.

It belongs to the GatC family. As to quaternary structure, heterotrimer of A, B and C subunits.

It catalyses the reaction L-glutamyl-tRNA(Gln) + L-glutamine + ATP + H2O = L-glutaminyl-tRNA(Gln) + L-glutamate + ADP + phosphate + H(+). The enzyme catalyses L-aspartyl-tRNA(Asn) + L-glutamine + ATP + H2O = L-asparaginyl-tRNA(Asn) + L-glutamate + ADP + phosphate + 2 H(+). Its function is as follows. Allows the formation of correctly charged Asn-tRNA(Asn) or Gln-tRNA(Gln) through the transamidation of misacylated Asp-tRNA(Asn) or Glu-tRNA(Gln) in organisms which lack either or both of asparaginyl-tRNA or glutaminyl-tRNA synthetases. The reaction takes place in the presence of glutamine and ATP through an activated phospho-Asp-tRNA(Asn) or phospho-Glu-tRNA(Gln). In Alkalilimnicola ehrlichii (strain ATCC BAA-1101 / DSM 17681 / MLHE-1), this protein is Aspartyl/glutamyl-tRNA(Asn/Gln) amidotransferase subunit C.